A 198-amino-acid polypeptide reads, in one-letter code: dITP/XTP pyrophosphatase (198 aa).

Serine 9–lysine 14 lines the substrate pocket. Aspartate 41 and aspartate 70 together coordinate Mg(2+). Aspartate 70 serves as the catalytic Proton acceptor. Substrate contacts are provided by residues serine 71, phenylalanine 153–aspartate 156, lysine 176, and histidine 181–arginine 182.

The protein belongs to the HAM1 NTPase family. In terms of assembly, homodimer. Mg(2+) serves as cofactor.

The enzyme catalyses XTP + H2O = XMP + diphosphate + H(+). The catalysed reaction is dITP + H2O = dIMP + diphosphate + H(+). It catalyses the reaction ITP + H2O = IMP + diphosphate + H(+). Functionally, pyrophosphatase that catalyzes the hydrolysis of nucleoside triphosphates to their monophosphate derivatives, with a high preference for the non-canonical purine nucleotides XTP (xanthosine triphosphate), dITP (deoxyinosine triphosphate) and ITP. Seems to function as a house-cleaning enzyme that removes non-canonical purine nucleotides from the nucleotide pool, thus preventing their incorporation into DNA/RNA and avoiding chromosomal lesions. This is dITP/XTP pyrophosphatase from Aromatoleum aromaticum (strain DSM 19018 / LMG 30748 / EbN1) (Azoarcus sp. (strain EbN1)).